Consider the following 202-residue polypeptide: Putative 3-methyladenine DNA glycosylase (202 aa).

Belongs to the DNA glycosylase MPG family.

In Staphylococcus aureus (strain MRSA252), this protein is Putative 3-methyladenine DNA glycosylase.